A 76-amino-acid polypeptide reads, in one-letter code: Conotoxin Ca11b (76 aa).

Residues 1–19 form the signal peptide; sequence MKLVLAIVVILMLLSLSTG. Positions 20-42 are excised as a propeptide; the sequence is AEMSDNHASMSANALRDRLLGPK. Disulfide bonds link C46-C60, C53-C65, C59-C69, and C64-C76.

As to expression, expressed by the venom duct.

The protein localises to the secreted. This Conus caracteristicus (Characteristic cone) protein is Conotoxin Ca11b.